The chain runs to 636 residues: Fructose-1,6-bisphosphatase class 3 (636 aa).

This sequence belongs to the FBPase class 3 family. Requires Mn(2+) as cofactor.

The enzyme catalyses beta-D-fructose 1,6-bisphosphate + H2O = beta-D-fructose 6-phosphate + phosphate. It participates in carbohydrate biosynthesis; gluconeogenesis. The chain is Fructose-1,6-bisphosphatase class 3 from Streptococcus gordonii (strain Challis / ATCC 35105 / BCRC 15272 / CH1 / DL1 / V288).